The chain runs to 318 residues: Ethylene-responsive transcription factor FZP (318 aa).

Low complexity predominate over residues 1–15 (MNTRGSGSSSSSSSS). Disordered stretches follow at residues 1 to 59 (MNTR…GRFL) and 158 to 178 (SYGHHHHHHHHHGHGAASGAS). The span at 25 to 37 (PPKPASQPSPPSS) shows a compositional bias: pro residues. Positions 57–114 (RFLGVRRRPWGRYAAEIRDPTTKERHWLGTFDTAQEAALAYDRAALSMKGAQARTNFV) form a DNA-binding region, AP2/ERF. Positions 160–171 (GHHHHHHHHHGH) are enriched in basic residues.

Belongs to the AP2/ERF transcription factor family. ERF subfamily.

It is found in the nucleus. In terms of biological role, required to prevent the formation of axillary meristems within the spikelet meristem and permit the subsequent establishment of floral meristem identity. Mediates the transition from spikelet to floret meristem. Determines the transition from panicle branching to spikelet formation. May specify floral organ identity by regulating the class B genes (Agamous-like genes) MADS6 and MADS17, as well as class E genes MADS1, MADS7 and MADS8 in floral meristem. Possesses transactivation activity. The protein is Ethylene-responsive transcription factor FZP of Oryza sativa subsp. japonica (Rice).